The sequence spans 457 residues: tRNA modification GTPase MnmE (457 aa).

(6S)-5-formyl-5,6,7,8-tetrahydrofolate contacts are provided by R25, E87, and R126. The 155-residue stretch at 223-377 folds into the TrmE-type G domain; it reads GISTAIIGRP…IEERINNLFF (155 aa). N233 contributes to the K(+) binding site. GTP is bound by residues 233–238, 252–258, and 277–280; these read NVGKSS, TDIAGTT, and DTAG. S237 provides a ligand contact to Mg(2+). K(+)-binding residues include T252, I254, and T257. T258 is a binding site for Mg(2+). Residue K457 participates in (6S)-5-formyl-5,6,7,8-tetrahydrofolate binding.

This sequence belongs to the TRAFAC class TrmE-Era-EngA-EngB-Septin-like GTPase superfamily. TrmE GTPase family. In terms of assembly, homodimer. Heterotetramer of two MnmE and two MnmG subunits. K(+) is required as a cofactor.

The protein resides in the cytoplasm. In terms of biological role, exhibits a very high intrinsic GTPase hydrolysis rate. Involved in the addition of a carboxymethylaminomethyl (cmnm) group at the wobble position (U34) of certain tRNAs, forming tRNA-cmnm(5)s(2)U34. This chain is tRNA modification GTPase MnmE, found in Streptococcus pneumoniae serotype 4 (strain ATCC BAA-334 / TIGR4).